The following is a 275-amino-acid chain: Anthracycline biosynthesis protein DauV (275 aa).

VOC domains follow at residues 8–136 and 150–263; these read APAW…VWRK and SVGW…VVEL.

The protein operates within antibiotic biosynthesis; daunorubicin biosynthesis. Its pathway is antibiotic biosynthesis; carminomycin biosynthesis. In terms of biological role, involved in the biosynthesis of the anthracyclines carminomycin and daunorubicin (daunomycin) which are aromatic polyketide antibiotics that exhibit high cytotoxicity and are widely applied in the chemotherapy of a variety of cancers. Acts jointly with DoxA in the conversion of 13-deoxycarminomycin and 13-deoxydaunorubicin to yield carminomycin and daunorubicin, respectively. The polypeptide is Anthracycline biosynthesis protein DauV (dauV) (Streptomyces sp. (strain C5)).